We begin with the raw amino-acid sequence, 106 residues long: Small ribosomal subunit protein uS17 (106 aa).

It belongs to the universal ribosomal protein uS17 family. Part of the 30S ribosomal subunit.

Functionally, one of the primary rRNA binding proteins, it binds specifically to the 5'-end of 16S ribosomal RNA. This chain is Small ribosomal subunit protein uS17, found in Picrophilus torridus (strain ATCC 700027 / DSM 9790 / JCM 10055 / NBRC 100828 / KAW 2/3).